The primary structure comprises 86 residues: Putative antitoxin VapB36 (86 aa).

Functionally, possibly the antitoxin component of a type II toxin-antitoxin (TA) system. Its cognate toxin is VapC36 (Potential). The chain is Putative antitoxin VapB36 (vapB36) from Mycobacterium tuberculosis (strain CDC 1551 / Oshkosh).